A 458-amino-acid polypeptide reads, in one-letter code: Argininosuccinate lyase (458 aa).

It belongs to the lyase 1 family. Argininosuccinate lyase subfamily.

The protein resides in the cytoplasm. It carries out the reaction 2-(N(omega)-L-arginino)succinate = fumarate + L-arginine. It participates in amino-acid biosynthesis; L-arginine biosynthesis; L-arginine from L-ornithine and carbamoyl phosphate: step 3/3. The chain is Argininosuccinate lyase from Buchnera aphidicola subsp. Baizongia pistaciae (strain Bp).